We begin with the raw amino-acid sequence, 445 residues long: Tubulin beta-9 chain (445 aa).

Residues Gln-11, Glu-69, Ser-138, Gly-142, Thr-143, Gly-144, Asn-204, and Asn-226 each coordinate GTP. Glu-69 serves as a coordination point for Mg(2+). The interval 423 to 445 (QQYQDATADDEEYEEEEEYEAEA) is disordered. Residues 429-445 (TADDEEYEEEEEYEAEA) show a composition bias toward acidic residues.

Belongs to the tubulin family. Dimer of alpha and beta chains. A typical microtubule is a hollow water-filled tube with an outer diameter of 25 nm and an inner diameter of 15 nM. Alpha-beta heterodimers associate head-to-tail to form protofilaments running lengthwise along the microtubule wall with the beta-tubulin subunit facing the microtubule plus end conferring a structural polarity. Microtubules usually have 13 protofilaments but different protofilament numbers can be found in some organisms and specialized cells. Mg(2+) serves as cofactor.

Its subcellular location is the cytoplasm. It is found in the cytoskeleton. Functionally, tubulin is the major constituent of microtubules, a cylinder consisting of laterally associated linear protofilaments composed of alpha- and beta-tubulin heterodimers. Microtubules grow by the addition of GTP-tubulin dimers to the microtubule end, where a stabilizing cap forms. Below the cap, tubulin dimers are in GDP-bound state, owing to GTPase activity of alpha-tubulin. The chain is Tubulin beta-9 chain from Gossypium hirsutum (Upland cotton).